Reading from the N-terminus, the 581-residue chain is NADP-dependent malic enzyme 1 (581 aa).

Catalysis depends on Tyr-129, which acts as the Proton donor. Arg-182 is a binding site for NADP(+). The active-site Proton acceptor is Lys-200. A divalent metal cation is bound by residues Glu-272, Asp-273, and Asp-296. NADP(+)-binding positions include Asp-296, 325–341 (LFLGAGEAGTGIAELIA), and Asn-437.

It belongs to the malic enzymes family. As to quaternary structure, homohexamers and homooctamers. It depends on Mg(2+) as a cofactor. Mn(2+) serves as cofactor. Specifically expressed in roots (only in steles of secondary roots).

It localises to the cytoplasm. It carries out the reaction (S)-malate + NADP(+) = pyruvate + CO2 + NADPH. It catalyses the reaction oxaloacetate + H(+) = pyruvate + CO2. The sequence is that of NADP-dependent malic enzyme 1 (NADP-ME1) from Arabidopsis thaliana (Mouse-ear cress).